We begin with the raw amino-acid sequence, 223 residues long: Immediate early response gene 2 protein (223 aa).

At M1 the chain carries N-acetylmethionine. The disordered stretch occupies residues 63–172; the sequence is AALPSDPRLH…PPAQAEGAFP (110 aa). Basic and acidic residues predominate over residues 69-78; that stretch reads PRLHPPREAE. Positions 125–138 are enriched in low complexity; sequence SSLSDGGDAGLVPS.

The protein belongs to the IER family. Expressed in activated T-cells (at protein level). Expression increases in metastatic tumor cells (at protein level).

It localises to the cytoplasm. The protein localises to the nucleus. DNA-binding protein that seems to act as a transcription factor. Involved in the regulation of neuronal differentiation, acts upon JNK-signaling pathway activation and plays a role in neurite outgrowth in hippocampal cells. May mediate with FIBP FGF-signaling in the establishment of laterality in the embryo. Promotes cell motility, seems to stimulate tumor metastasis. This is Immediate early response gene 2 protein from Homo sapiens (Human).